Reading from the N-terminus, the 70-residue chain is Probable U6 snRNA-associated Sm-like protein (70 aa).

The 68-residue stretch at 3–70 (DPFCFLKMYL…ILFVGPRLLL (68 aa)) folds into the Sm domain.

This sequence belongs to the snRNP Sm proteins family.

Its subcellular location is the nucleus. Functionally, binds specifically to the 3'-terminal U-tract of U6 snRNA. The polypeptide is Probable U6 snRNA-associated Sm-like protein (Encephalitozoon cuniculi (strain GB-M1) (Microsporidian parasite)).